The chain runs to 527 residues: Putative BTB/POZ domain-containing protein R225 (527 aa).

In terms of domain architecture, BTB spans 16–89 (TDLELVLTDP…YGQTNRSTDY (74 aa)).

The protein belongs to the mimivirus BTB/WD family.

The chain is Putative BTB/POZ domain-containing protein R225 from Acanthamoeba polyphaga (Amoeba).